The sequence spans 190 residues: MNGATVQPSYKEAGPVRYHPMHDCLSLILRLLTLGATIAAIVAMLKSTQTVPTLLGPHTARWKDFPAFEWFVIGNSIVLVYAALGTLAACLSLFTRRGPLSYTKTAWLTFLCDFICSCALISAGSTALGVAWIGKHGQHSAFWNAVCPTVDRFCDYVQGALIATLCGFIFQALSTVIAASALHNLATHRH.

The Cytoplasmic segment spans residues 1–24; that stretch reads MNGATVQPSYKEAGPVRYHPMHDC. A helical transmembrane segment spans residues 25–45; sequence LSLILRLLTLGATIAAIVAML. Over 46–70 the chain is Extracellular; the sequence is KSTQTVPTLLGPHTARWKDFPAFEW. A helical transmembrane segment spans residues 71-91; it reads FVIGNSIVLVYAALGTLAACL. Over 92–113 the chain is Cytoplasmic; it reads SLFTRRGPLSYTKTAWLTFLCD. The helical transmembrane segment at 114–134 threads the bilayer; it reads FICSCALISAGSTALGVAWIG. The Extracellular segment spans residues 135–158; the sequence is KHGQHSAFWNAVCPTVDRFCDYVQ. A helical membrane pass occupies residues 159–179; the sequence is GALIATLCGFIFQALSTVIAA. Residues 180–190 are Cytoplasmic-facing; sequence SALHNLATHRH.

Belongs to the Casparian strip membrane proteins (CASP) family. As to quaternary structure, homodimer and heterodimers.

It is found in the cell membrane. The polypeptide is CASP-like protein 1U3 (Physcomitrium patens (Spreading-leaved earth moss)).